Here is a 762-residue protein sequence, read N- to C-terminus: Primary amine oxidase, lung isozyme (762 aa).

The N-terminal stretch at 1-16 (MFIFIFLSLWTLLVMG) is a signal peptide. A disordered region spans residues 23-54 (GSEEGVGKQCHPSLPPRCPSRSPSDQPWTHPD). N-linked (GlcNAc...) asparagine glycosylation occurs at Asn-136. Cys-197 and Cys-198 are disulfide-bonded. The O-linked (GalNAc...) threonine glycan is linked to Thr-211. 2 N-linked (GlcNAc...) asparagine glycosylation sites follow: Asn-231 and Asn-293. Position 383–393 (383–393 (YMDACFGMGKF)) interacts with substrate. Asp-385 acts as the Proton acceptor in catalysis. An intrachain disulfide couples Cys-403 to Cys-429. 467–472 (LLNYDY) serves as a coordination point for substrate. The active-site Schiff-base intermediate with substrate; via topaquinone is the Tyr-470. 2',4',5'-topaquinone is present on Tyr-470. Cu cation contacts are provided by His-519 and His-521. Ca(2+) contacts are provided by Asp-528, Leu-529, Asp-530, and Glu-571. Residue 577 to 584 (PLGGGSPR) coordinates heparin. An N-linked (GlcNAc...) asparagine glycan is attached at Asn-617. Residues Phe-662 and Asn-664 each contribute to the Ca(2+) site. A glycan (N-linked (GlcNAc...) asparagine) is linked at Asn-665. Positions 666, 672, and 673 each coordinate Ca(2+). His-683 contributes to the Cu cation binding site. A disulfide bond links Cys-733 and Cys-740.

It belongs to the copper/topaquinone oxidase family. As to quaternary structure, homodimer; disulfide-linked. Requires Cu cation as cofactor. It depends on Ca(2+) as a cofactor. The cofactor is L-topaquinone. Topaquinone (TPQ) is generated by copper-dependent autoxidation of a specific tyrosyl residue. In terms of tissue distribution, expressed in lung, spleen, heart and kidney.

It is found in the secreted. The protein resides in the extracellular space. It carries out the reaction a primary methyl amine + O2 + H2O = an aldehyde + H2O2 + NH4(+). This Bos taurus (Bovine) protein is Primary amine oxidase, lung isozyme.